Reading from the N-terminus, the 310-residue chain is Ribosomal RNA small subunit methyltransferase H (310 aa).

Residues 47 to 49 (GGH), Asp66, Phe93, Asp108, and Gln115 contribute to the S-adenosyl-L-methionine site.

The protein belongs to the methyltransferase superfamily. RsmH family.

The protein localises to the cytoplasm. The catalysed reaction is cytidine(1402) in 16S rRNA + S-adenosyl-L-methionine = N(4)-methylcytidine(1402) in 16S rRNA + S-adenosyl-L-homocysteine + H(+). In terms of biological role, specifically methylates the N4 position of cytidine in position 1402 (C1402) of 16S rRNA. The polypeptide is Ribosomal RNA small subunit methyltransferase H (Prochlorococcus marinus (strain MIT 9303)).